The chain runs to 24 residues: Lycosin-I (24 aa).

This sequence belongs to the cationic peptide 04 (cupiennin) family. 05 subfamily. As to quaternary structure, monomer in solution. Small size oligomers on the lipid membranes.

The protein resides in the secreted. It is found in the target cell membrane. Functionally, antimicrobial peptide that inhibits many reference strains of bacteria and fungi. Is potent against Candida species and multidrug-resistant Acinetobacter baumannii (MDRAB). Is probably localized in the cytoplasm after being transported through the cell wall and membrane. Is able to interact with cell membranes and enter into cell plasma to activate the mitochondrial death pathway to sensitize cancer cells for apoptosis, as well as up-regulates p27 to inhibit cell proliferation. It shows very low effect on normal cells, such as erythrocytes, Hek293t cells. It also potently inhibits tumor cell growth in vitro, and suppresses various tumor growth in vivo when tested in human cancer xenograft models. It interacts with the cell membrane and is then internalized into the cytoplasm of cancer cells to initiate the programmable cell death. In addition, this peptide has the therapeutic effects of anti-hypertension by endothelium-dependent vasodilatation via the NO/sGC/cGMP signaling pathway. In vivo, this peptide also shows a significant ability to inhibit T.gondii invasion and proliferation, making it a potential alternative agent for the treatment of toxoplasmosis. This is Lycosin-I from Lycosa singoriensis (Wolf spider).